A 156-amino-acid polypeptide reads, in one-letter code: Small ribosomal subunit protein uS7 (156 aa).

The protein belongs to the universal ribosomal protein uS7 family. In terms of assembly, part of the 30S ribosomal subunit. Contacts proteins S9 and S11.

One of the primary rRNA binding proteins, it binds directly to 16S rRNA where it nucleates assembly of the head domain of the 30S subunit. Is located at the subunit interface close to the decoding center, probably blocks exit of the E-site tRNA. In Beijerinckia indica subsp. indica (strain ATCC 9039 / DSM 1715 / NCIMB 8712), this protein is Small ribosomal subunit protein uS7.